We begin with the raw amino-acid sequence, 402 residues long: Ferrochelatase, mitochondrial (402 aa).

A mitochondrion-targeting transit peptide spans 1 to 33 (MAAAGRAARPLVAGGRQLRVPLRWRGQVAAAAP). 3 residues coordinate protoporphyrin IX: R94, Y102, and S109. C175 serves as a coordination point for [2Fe-2S] cluster. Active-site residues include H209 and D362. The [2Fe-2S] cluster site is built by C382, C385, and C390.

Belongs to the ferrochelatase family. Homodimer. Homotetramer. [2Fe-2S] cluster serves as cofactor.

It is found in the mitochondrion inner membrane. It carries out the reaction heme b + 2 H(+) = protoporphyrin IX + Fe(2+). Its pathway is porphyrin-containing compound metabolism; protoheme biosynthesis; protoheme from protoporphyrin-IX: step 1/1. Catalyzes the ferrous insertion into protoporphyrin IX. This chain is Ferrochelatase, mitochondrial, found in Gallus gallus (Chicken).